We begin with the raw amino-acid sequence, 157 residues long: MKVLEGIVTAPNAKIAVVIARFNSFINESLLEGALDALKRIGQVKDENITLVRVPGAYELPLIARRLADSKKYDAIVALGTVIRGGTAHFEYVAGEASSGLGQVAMQAEIPVAFGVLTTENIEQAIERAGTKAGNKGAEAALVALEMVNLLAQIDKA.

Residues F22, 57 to 59 (AYE), and 81 to 83 (TVI) each bind 5-amino-6-(D-ribitylamino)uracil. A (2S)-2-hydroxy-3-oxobutyl phosphate-binding site is contributed by 86–87 (GT). H89 serves as the catalytic Proton donor. F114 is a binding site for 5-amino-6-(D-ribitylamino)uracil. R128 provides a ligand contact to (2S)-2-hydroxy-3-oxobutyl phosphate.

Belongs to the DMRL synthase family. As to quaternary structure, forms an icosahedral capsid composed of 60 subunits, arranged as a dodecamer of pentamers.

The catalysed reaction is (2S)-2-hydroxy-3-oxobutyl phosphate + 5-amino-6-(D-ribitylamino)uracil = 6,7-dimethyl-8-(1-D-ribityl)lumazine + phosphate + 2 H2O + H(+). It participates in cofactor biosynthesis; riboflavin biosynthesis; riboflavin from 2-hydroxy-3-oxobutyl phosphate and 5-amino-6-(D-ribitylamino)uracil: step 1/2. Catalyzes the formation of 6,7-dimethyl-8-ribityllumazine by condensation of 5-amino-6-(D-ribitylamino)uracil with 3,4-dihydroxy-2-butanone 4-phosphate. This is the penultimate step in the biosynthesis of riboflavin. This is 6,7-dimethyl-8-ribityllumazine synthase from Histophilus somni (strain 129Pt) (Haemophilus somnus).